A 432-amino-acid chain; its full sequence is D-amino acid dehydrogenase (432 aa).

FAD is bound at residue 3–17; that stretch reads VVILGSGVVGVASAW.

This sequence belongs to the DadA oxidoreductase family. It depends on FAD as a cofactor.

It catalyses the reaction a D-alpha-amino acid + A + H2O = a 2-oxocarboxylate + AH2 + NH4(+). The protein operates within amino-acid degradation; D-alanine degradation; NH(3) and pyruvate from D-alanine: step 1/1. Its function is as follows. Oxidative deamination of D-amino acids. This is D-amino acid dehydrogenase from Shigella dysenteriae serotype 1 (strain Sd197).